The following is a 367-amino-acid chain: GTP cyclohydrolase FolE2 (367 aa).

The protein belongs to the GTP cyclohydrolase IV family.

The catalysed reaction is GTP + H2O = 7,8-dihydroneopterin 3'-triphosphate + formate + H(+). The protein operates within cofactor biosynthesis; 7,8-dihydroneopterin triphosphate biosynthesis; 7,8-dihydroneopterin triphosphate from GTP: step 1/1. Converts GTP to 7,8-dihydroneopterin triphosphate. The sequence is that of GTP cyclohydrolase FolE2 from Dinoroseobacter shibae (strain DSM 16493 / NCIMB 14021 / DFL 12).